The sequence spans 506 residues: Cytochrome P450 monooxygenase tpcB (506 aa).

C450 serves as a coordination point for heme.

It belongs to the cytochrome P450 family. Heme serves as cofactor.

It functions in the pathway secondary metabolite biosynthesis; terpenoid biosynthesis. In terms of biological role, cytochrome P450 monooxygenase; part of the gene cluster that mediates the biosynthesis of terpestacin. The bifunctional terpene synthase tpcA converts isopentenyl diphosphate (IPP) and dimethylallyl diphosphate (DMAPP) into the sesterterpene preterpestacin I. The C-terminal prenyltransferase (PT) domain of tpcA catalyzes formation of GFPP, whereas the N-terminal terpene cyclase (TC) domain catalyzes the cyclization of GFPP into preterpestacin I. The cytochrome P450 monooxygenase tpcB then hydroxylates preterpestacin I to yield 24-hydroxypreterpstacin I (renamed as preterpestacin II) whereas the cytochrome P450 monooxygenase tpcC further hydroxylates preterpestacin II to yield 16,17-dihydroxypreterpestacin II (renamed as preterpestacin III). Finally, the FAD-dependent monooxygenase tpcD converts preterpestacin III into terpestacin. This is Cytochrome P450 monooxygenase tpcB from Cochliobolus heterostrophus (strain C5 / ATCC 48332 / race O) (Southern corn leaf blight fungus).